Here is a 223-residue protein sequence, read N- to C-terminus: Deoxyribose-phosphate aldolase (223 aa).

Asp-91 acts as the Proton donor/acceptor in catalysis. Lys-153 acts as the Schiff-base intermediate with acetaldehyde in catalysis. Lys-182 acts as the Proton donor/acceptor in catalysis.

It belongs to the DeoC/FbaB aldolase family. DeoC type 1 subfamily.

Its subcellular location is the cytoplasm. It catalyses the reaction 2-deoxy-D-ribose 5-phosphate = D-glyceraldehyde 3-phosphate + acetaldehyde. Its pathway is carbohydrate degradation; 2-deoxy-D-ribose 1-phosphate degradation; D-glyceraldehyde 3-phosphate and acetaldehyde from 2-deoxy-alpha-D-ribose 1-phosphate: step 2/2. Functionally, catalyzes a reversible aldol reaction between acetaldehyde and D-glyceraldehyde 3-phosphate to generate 2-deoxy-D-ribose 5-phosphate. In Streptococcus pyogenes serotype M1, this protein is Deoxyribose-phosphate aldolase.